The primary structure comprises 87 residues: U3-theraphotoxin-Hhn1o (87 aa).

Residues 1–24 (MVNMKASMFLTFAGLVLLFVVCYA) form the signal peptide. A propeptide spanning residues 25 to 52 (SESEEKEFPKEMLSSIFAVDNDFKQEER) is cleaved from the precursor. Disulfide bonds link Cys-54–Cys-67 and Cys-61–Cys-72.

Belongs to the neurotoxin 10 (Hwtx-1) family. 51 (Hntx-8) subfamily. Hntx-8 sub-subfamily. In terms of tissue distribution, expressed by the venom gland.

The protein localises to the secreted. Functionally, ion channel inhibitor. This chain is U3-theraphotoxin-Hhn1o, found in Cyriopagopus hainanus (Chinese bird spider).